The sequence spans 856 residues: MRRVLMVNFGVLLLFCFGVLSNSFGQDNGGDSDINSTTAVYIVTLRQASSLHLFQQEAEEVKRVRDQSKHGDTSKFTRPKLQPRNISRSRYWRSRRSAIAQAHDSLLRNALKGEKYIKLYSFHYLINGFAVFVSSQQAETLSRRREVANIVLDFSVRTATTYTPQFMGLPKGAWVKEGGYETAGEGIVIGFIDTGIDPTHPSFNGTDTSQRQYPIPNHFSGVCEVTPDFPSGSCNRKLVGARHFAQSAITRGIFNSSEDYASPFDGDGHGTHTASIAAGNHGVSAVVSGHNFGSASGIAPRAHISVYKALYKSFGGFAADVVAAIDQAAQDGVDILSLSITPNRRPPGVATFFNPLDMAMLSAVKAGIFVVQAAGNTGPSPKSMSSFSPWIFTVGAASHDRDYSNSIVLGNNVSIPGVGLALRTDEGKKYTMISALDALKNKSSVVDKDMYVGECQDYGSFDKDVIRGNLLICSYSIRFVLGLSTIKQALAVAKNLSAKGVVFYMDPYVLGFQINPTPMDMPGIIIPSAEDSKVLLKYYNSSLVRDGTTKEIVRFGAVAAIAGGQNANFSNRAPKIMYYSARGPDPQDSLFNDADILKPNLVAPGNSIWGAWSSAATESTEFEGESFAMMSGTSMAAPHVAGVAALVKQKFRKFSPSAIASALSTTSVLFDNKGEAIMAQRAYANPDQTISPATPFDMGNGFVNATAALDPGLIFDTSFEDYMSFLCGINGSAPVVFNYTGTNCLRNNATISGSDLNLPSITVSKLNNTRTVQRLMTNIAGNETYTVSLITPFDVLINVSPTQFSIASGETKLLSVILTAKRNSSISSFGGIKLLGNAGHIVRIPVSVTVKIASKQ.

The N-terminal stretch at 1–21 is a signal peptide; that stretch reads MRRVLMVNFGVLLLFCFGVLS. The propeptide at 22 to 159 is activation peptide; the sequence is NSFGQDNGGD…IVLDFSVRTA (138 aa). N-linked (GlcNAc...) asparagine glycosylation is found at asparagine 35 and asparagine 85. Residues 40-159 enclose the Inhibitor I9 domain; that stretch reads VYIVTLRQAS…IVLDFSVRTA (120 aa). The Peptidase S8 domain occupies 164–709; the sequence is PQFMGLPKGA…NGFVNATAAL (546 aa). Aspartate 193 serves as the catalytic Charge relay system. 2 N-linked (GlcNAc...) asparagine glycosylation sites follow: asparagine 204 and asparagine 255. Histidine 269 acts as the Charge relay system in catalysis. N-linked (GlcNAc...) asparagine glycosylation is found at asparagine 412, asparagine 441, asparagine 495, asparagine 540, and asparagine 568. The region spanning 432-528 is the PA domain; that stretch reads MISALDALKN…MDMPGIIIPS (97 aa). The active-site Charge relay system is the serine 634. 7 N-linked (GlcNAc...) asparagine glycosylation sites follow: asparagine 704, asparagine 730, asparagine 738, asparagine 748, asparagine 767, asparagine 782, and asparagine 823.

This sequence belongs to the peptidase S8 family.

The protein localises to the secreted. This chain is Subtilisin-like protease SBT2.2, found in Arabidopsis thaliana (Mouse-ear cress).